The sequence spans 1410 residues: Endoribonuclease Dicer homolog 2a (1410 aa).

Residues 1-15 (MGGPLTAAGGRGDGG) are compositionally biased toward gly residues. The disordered stretch occupies residues 1–30 (MGGPLTAAGGRGDGGAKAVEPLRPPPPPDP). The 182-residue stretch at 41–222 (ALERAVRGNT…HNYSKQISEI (182 aa)) folds into the Helicase ATP-binding domain. Position 54–61 (54–61 (LETGSGKT)) interacts with ATP. Positions 163-166 (DECH) match the DECH box motif. Residues 388–561 (TLLQYRHMQD…DTYYRVESTR (174 aa)) enclose the Helicase C-terminal domain. In terms of domain architecture, Dicer dsRNA-binding fold spans 569 to 655 (SVPLIHFFCS…LPELDVPCDE (87 aa)). Positions 827–942 (KDIDLLQTKD…LPPELCRIIM (116 aa)) constitute a PAZ domain. RNase III domains lie at 969-1124 (SVKL…STAG) and 1161-1308 (VRSL…LDSK). Glu1200, Asp1294, and Glu1297 together coordinate Mg(2+). Residues 1334 to 1400 (DPVKGLQEFC…SKAVLKDLIA (67 aa)) form the DRBM domain.

The protein belongs to the helicase family. Dicer subfamily. In terms of assembly, may interact with ARGONAUTE1 or PINHEAD through their common PAZ domains. It depends on Mg(2+) as a cofactor. Requires Mn(2+) as cofactor.

It is found in the nucleus. Its function is as follows. Probably involved in the RNA silencing pathway. May cleave double-stranded RNA to produce short 21-24 nucleotides (nt) RNAs which target the selective destruction of complementary RNAs. This Oryza sativa subsp. japonica (Rice) protein is Endoribonuclease Dicer homolog 2a (DCL2A).